A 168-amino-acid chain; its full sequence is Monothiol glutaredoxin-S7, chloroplastic (168 aa).

The N-terminal 54 residues, 1 to 54 (MAATAAASVAAISPLPGASLPRPVSARVPLLPRASPPTWRLSVGSARARSTRCL), are a transit peptide targeting the chloroplast. One can recognise a Glutaredoxin domain in the interval 67 to 168 (RATLDKVVGS…QETLEKAMLS (102 aa)). K84 contacts glutathione. C92 contributes to the [2Fe-2S] cluster binding site. Residues R121, F133, and 146–147 (CD) contribute to the glutathione site.

It belongs to the glutaredoxin family. CGFS subfamily.

The protein localises to the plastid. Its subcellular location is the chloroplast. Its function is as follows. May only reduce GSH-thiol disulfides, but not protein disulfides. This chain is Monothiol glutaredoxin-S7, chloroplastic (GRXS7), found in Oryza sativa subsp. japonica (Rice).